The sequence spans 63 residues: Large ribosomal subunit protein uL29 (63 aa).

This sequence belongs to the universal ribosomal protein uL29 family.

The chain is Large ribosomal subunit protein uL29 from Alcanivorax borkumensis (strain ATCC 700651 / DSM 11573 / NCIMB 13689 / SK2).